We begin with the raw amino-acid sequence, 314 residues long: tRNA pseudouridine synthase B (314 aa).

His-43 lines the substrate pocket. Asp-48 acts as the Nucleophile in catalysis. Positions 76, 179, and 200 each coordinate substrate.

It belongs to the pseudouridine synthase TruB family. Type 1 subfamily.

The catalysed reaction is uridine(55) in tRNA = pseudouridine(55) in tRNA. Its function is as follows. Responsible for synthesis of pseudouridine from uracil-55 in the psi GC loop of transfer RNAs. The chain is tRNA pseudouridine synthase B from Salmonella paratyphi B (strain ATCC BAA-1250 / SPB7).